The chain runs to 379 residues: Cytochrome b (379 aa).

4 consecutive transmembrane segments (helical) span residues 33–53 (FGSL…FLAM), 77–98 (WTIR…FIHV), 113–133 (WNIG…GYVL), and 178–198 (FFAL…IHLL). Heme b contacts are provided by H83 and H97. The heme b site is built by H182 and H196. H201 lines the a ubiquinone pocket. The next 4 membrane-spanning stretches (helical) occupy residues 226–246 (TKDF…TLFY), 288–308 (LGGV…PFLQ), 320–340 (LSQF…WIGG), and 347–367 (FINI…FIMP).

This sequence belongs to the cytochrome b family. In terms of assembly, the cytochrome bc1 complex contains 11 subunits: 3 respiratory subunits (MT-CYB, CYC1 and UQCRFS1), 2 core proteins (UQCRC1 and UQCRC2) and 6 low-molecular weight proteins (UQCRH/QCR6, UQCRB/QCR7, UQCRQ/QCR8, UQCR10/QCR9, UQCR11/QCR10 and a cleavage product of UQCRFS1). This cytochrome bc1 complex then forms a dimer. Requires heme b as cofactor.

The protein localises to the mitochondrion inner membrane. Component of the ubiquinol-cytochrome c reductase complex (complex III or cytochrome b-c1 complex) that is part of the mitochondrial respiratory chain. The b-c1 complex mediates electron transfer from ubiquinol to cytochrome c. Contributes to the generation of a proton gradient across the mitochondrial membrane that is then used for ATP synthesis. The polypeptide is Cytochrome b (MT-CYB) (Lepilemur aeeclis (Sportive lemur)).